Consider the following 414-residue polypeptide: 3-oxoacyl-[acyl-carrier-protein] synthase 2 (414 aa).

One can recognise a Ketosynthase family 3 (KS3) domain in the interval 4 to 411; it reads NKRVVITGMG…GHNAVLVFKK (408 aa). Active-site for beta-ketoacyl synthase activity residues include C165, H304, and H341.

This sequence belongs to the thiolase-like superfamily. Beta-ketoacyl-ACP synthases family.

The enzyme catalyses a fatty acyl-[ACP] + malonyl-[ACP] + H(+) = a 3-oxoacyl-[ACP] + holo-[ACP] + CO2. The catalysed reaction is (9Z)-hexadecenoyl-[ACP] + malonyl-[ACP] + H(+) = 3-oxo-(11Z)-octadecenoyl-[ACP] + holo-[ACP] + CO2. It functions in the pathway lipid metabolism; fatty acid biosynthesis. In terms of biological role, involved in the type II fatty acid elongation cycle. Catalyzes the elongation of a wide range of acyl-ACP by the addition of two carbons from malonyl-ACP to an acyl acceptor. Can efficiently catalyze the conversion of palmitoleoyl-ACP (cis-hexadec-9-enoyl-ACP) to cis-vaccenoyl-ACP (cis-octadec-11-enoyl-ACP), an essential step in the thermal regulation of fatty acid composition. In Staphylococcus aureus (strain MW2), this protein is 3-oxoacyl-[acyl-carrier-protein] synthase 2 (fabF).